The sequence spans 598 residues: Polypeptide N-acetylgalactosaminyltransferase 17 (598 aa).

Topologically, residues 1-6 (MASLRR) are cytoplasmic. A helical; Signal-anchor for type II membrane protein transmembrane segment spans residues 7 to 27 (VKVLLVLNLIAVAGFVLFLAK). Residues 28-598 (CRPIAVRSGD…QRWTIKNSIK (571 aa)) lie on the Lumenal side of the membrane. Asparagine 50 carries an N-linked (GlcNAc...) asparagine glycan. Cystine bridges form between cysteine 142–cysteine 373 and cysteine 364–cysteine 443. The tract at residues 151–262 (LPQISIIFIF…AGWAEPVLSR (112 aa)) is catalytic subdomain A. The substrate site is built by aspartate 192 and arginine 223. The Mn(2+) site is built by aspartate 246, histidine 248, and histidine 378. Residues 319–381 (PIRTPAMIGC…PCSRVAHIER (63 aa)) form a catalytic subdomain B region. The substrate site is built by arginine 381 and tyrosine 386. N-linked (GlcNAc...) asparagine glycosylation is found at asparagine 461 and asparagine 486. In terms of domain architecture, Ricin B-type lectin spans 465-594 (AYGELRNNKA…SCTGQRWTIK (130 aa)). Intrachain disulfides connect cysteine 478–cysteine 494, cysteine 526–cysteine 541, and cysteine 568–cysteine 586.

Belongs to the glycosyltransferase 2 family. GalNAc-T subfamily. It depends on Mn(2+) as a cofactor. In terms of tissue distribution, highly expressed in brain and heart. Weakly expressed in kidney, liver, lung and spleen.

Its subcellular location is the golgi apparatus membrane. It carries out the reaction L-seryl-[protein] + UDP-N-acetyl-alpha-D-galactosamine = a 3-O-[N-acetyl-alpha-D-galactosaminyl]-L-seryl-[protein] + UDP + H(+). The enzyme catalyses L-threonyl-[protein] + UDP-N-acetyl-alpha-D-galactosamine = a 3-O-[N-acetyl-alpha-D-galactosaminyl]-L-threonyl-[protein] + UDP + H(+). Its pathway is protein modification; protein glycosylation. May catalyze the initial reaction in O-linked oligosaccharide biosynthesis, the transfer of an N-acetyl-D-galactosamine residue to a serine or threonine residue on the protein receptor. The chain is Polypeptide N-acetylgalactosaminyltransferase 17 from Homo sapiens (Human).